The following is a 71-amino-acid chain: Vitellogenin-A1 (71 aa).

An N-terminal signal peptide occupies residues 1–15; sequence MRGIILALLLAIAGS. The region spanning 24–71 is the Vitellogenin domain; the sequence is FSESKTSVYNYEAVILNGFPESGLSRAGIKINCKVEISAYAQRSYFLK.

In terms of tissue distribution, produced by the liver, secreted into the blood and then sequestered by receptor mediated endocytosis into growing oocytes, where it is generally cleaved, giving rise to the respective yolk components.

Its function is as follows. Precursor of the major egg-yolk proteins that are sources of nutrients during early development of oviparous organisms. This chain is Vitellogenin-A1, found in Xenopus laevis (African clawed frog).